The sequence spans 250 residues: 1-(5-phosphoribosyl)-5-[(5-phosphoribosylamino)methylideneamino] imidazole-4-carboxamide isomerase (250 aa).

Catalysis depends on Asp-12, which acts as the Proton acceptor. Asp-134 functions as the Proton donor in the catalytic mechanism.

It belongs to the HisA/HisF family.

It is found in the cytoplasm. It catalyses the reaction 1-(5-phospho-beta-D-ribosyl)-5-[(5-phospho-beta-D-ribosylamino)methylideneamino]imidazole-4-carboxamide = 5-[(5-phospho-1-deoxy-D-ribulos-1-ylimino)methylamino]-1-(5-phospho-beta-D-ribosyl)imidazole-4-carboxamide. It participates in amino-acid biosynthesis; L-histidine biosynthesis; L-histidine from 5-phospho-alpha-D-ribose 1-diphosphate: step 4/9. This chain is 1-(5-phosphoribosyl)-5-[(5-phosphoribosylamino)methylideneamino] imidazole-4-carboxamide isomerase, found in Actinobacillus pleuropneumoniae serotype 5b (strain L20).